The primary structure comprises 1072 residues: DNA-directed RNA polymerase subunit beta (1072 aa).

Belongs to the RNA polymerase beta chain family. In terms of assembly, in plastids the minimal PEP RNA polymerase catalytic core is composed of four subunits: alpha, beta, beta', and beta''. When a (nuclear-encoded) sigma factor is associated with the core the holoenzyme is formed, which can initiate transcription.

Its subcellular location is the plastid. It is found in the chloroplast. The enzyme catalyses RNA(n) + a ribonucleoside 5'-triphosphate = RNA(n+1) + diphosphate. In terms of biological role, DNA-dependent RNA polymerase catalyzes the transcription of DNA into RNA using the four ribonucleoside triphosphates as substrates. The sequence is that of DNA-directed RNA polymerase subunit beta from Lobularia maritima (Sweet alyssum).